The sequence spans 429 residues: MVNSCENKIFVKPTSTTILQDETRSRKFGQEMKREKRRVLRVINQNLAGARVYPCVVNKRGSLLSNKQEEEEGCQKKKFDSLRPSVTRSGVEEETNKKLKPSVPSANDFGDCIFIDEEEATLDLPMPMSLEKPYIEADPMEEVEMEDVTVEEPIVDIDVLDSKNSLAAVEYVQDLYAFYRTMERFSCVPVDYMMQQIDLNEKMRAILIDWLIEVHDKFDLINETLFLTVNLIDRFLSKQNVMRKKLQLVGLVALLLACKYEEVSVPVVEDLVLISDKAYTRNDVLEMEKTMLSTLQFNISLPTQYPFLKRFLKAAQADKKCEVLASFLIELALVEYEMLRFPPSLLAATSVYTAQCTLDGSRKWNSTCEFHCHYSEDQLMECSRKLVSLHQRAATGNLTGVYRKYSTSKFGYIAKCEAAHFLVSESHHS.

Belongs to the cyclin family. Cyclin AB subfamily. Interacts with CDC20-1 and CDC20-2. Expressed in roots, stems, leaves, flowers and siliques.

In Arabidopsis thaliana (Mouse-ear cress), this protein is Cyclin-B2-1 (CYCB2-1).